The primary structure comprises 220 residues: MEKTVIYLLEDGYVDFVVEKIRTKMEKLLEEKDKIFVVLAGGRTPLPVYEKLAEQKFPWNRIHFFLSDERYVPLDSDQSNFRNINEVLFSRAKIPSGNVHYVDTSLPIEKACEKYEREIRSATDQFDLAILGMGPDGHVASIFDLETGNKDNLVTFTDPSGDPKVPRVTLTFRALNTSLYVLFLIRGKEKINRLTEILKDTPLPAYFVRGKEKTVWFVGK.

Belongs to the glucosamine/galactosamine-6-phosphate isomerase family. 6-phosphogluconolactonase subfamily.

The enzyme catalyses 6-phospho-D-glucono-1,5-lactone + H2O = 6-phospho-D-gluconate + H(+). The protein operates within carbohydrate degradation; pentose phosphate pathway; D-ribulose 5-phosphate from D-glucose 6-phosphate (oxidative stage): step 2/3. Functionally, hydrolysis of 6-phosphogluconolactone to 6-phosphogluconate. The sequence is that of 6-phosphogluconolactonase (pgl) from Thermotoga maritima (strain ATCC 43589 / DSM 3109 / JCM 10099 / NBRC 100826 / MSB8).